The primary structure comprises 926 residues: ABC transporter A family member 6 (926 aa).

6 consecutive transmembrane segments (helical) span residues 34–54 (LIVIPLYLCVVLVCIQAVFDS), 336–356 (ASLIGPIFFTWVILLLFPVIL), 389–409 (FLAISTLYIVCLMIFGSAIGL), 418–438 (TIQFMFYFLYINLQISIAFLV), 451–471 (VAYIYVFGSGLLGAFLFQFLI), and 525–545 (DEVFTIIIVEWVVALVATYYI). One can recognise an ABC transporter domain in the interval 610–847 (IVCDNLKKVY…YGGSYVLTIT (238 aa)). 648–655 (GPNGAGKT) serves as a coordination point for ATP.

This sequence belongs to the ABC transporter superfamily. ABCA family. CPR flippase (TC 3.A.1.211) subfamily.

It localises to the membrane. The sequence is that of ABC transporter A family member 6 (ABCA6) from Arabidopsis thaliana (Mouse-ear cress).